The chain runs to 413 residues: Putative competence-damage inducible protein (413 aa).

It belongs to the CinA family.

The sequence is that of Putative competence-damage inducible protein from Pediococcus pentosaceus (strain ATCC 25745 / CCUG 21536 / LMG 10740 / 183-1w).